The following is a 974-amino-acid chain: Kinase-interacting protein 1 (974 aa).

The region spanning Tyr10 to Leu90 is the NAB domain. A disordered region spans residues Ser151–Lys170. The stretch at Leu173 to Arg423 forms a coiled coil. The disordered stretch occupies residues Ala586–Lys614. Residues Ser599–Thr610 are compositionally biased toward polar residues. Residues Asn641–Ser697 are a coiled coil. A disordered region spans residues Leu714–Glu740. The segment covering Leu726–Asp736 has biased composition (basic and acidic residues). Coiled coils occupy residues His784 to Glu807 and Ala882 to Ala905.

Homodimer or homooligomer. Interacts with PRK1. Post-translationally, phosphorylated by PRK1. Expressed in mature pollen grains and pollen tubes, but not in style, ovary, petal, leaf, root or sepal.

The protein localises to the cytoplasm. Functionally, probably involved in the receptor-like kinase-mediated signal transduction pathway. This chain is Kinase-interacting protein 1, found in Petunia integrifolia (Violet-flowered petunia).